A 1216-amino-acid polypeptide reads, in one-letter code: Sodium/potassium/calcium exchanger 1 (1216 aa).

Over 1–446 the chain is Extracellular; the sequence is MGKLIRMGAQ…DLFSVEERRQ (446 aa). The segment at 94-196 is disordered; that stretch reads EATAGRDGTP…KYSPSPLGRM (103 aa). Composition is skewed to polar residues over residues 110–135 and 144–166; these read NTPSTPRGTASITPAIPNNYSPTPTG and SATPSGVLNHYTQSRPMVNSYTR. N-linked (GlcNAc...) asparagine glycosylation is found at N290 and N303. The chain crosses the membrane as a helical span at residues 447-467; it reads GWVVLHIFGMMYVFVALAIVC. Topologically, residues 468–491 are cytoplasmic; that stretch reads DEYFVPALGVITDKLQISEDVAGA. The stretch at 488-528 is one Alpha-1 repeat; that stretch reads VAGATFMAAGGSAPELFTSLIGVFISHSNVGIGTIVGSAVF. Residues 492 to 512 traverse the membrane as a helical segment; sequence TFMAAGGSAPELFTSLIGVFI. Topologically, residues 513 to 518 are extracellular; it reads SHSNVG. The helical transmembrane segment at 519–539 threads the bilayer; that stretch reads IGTIVGSAVFNILFVIGTCAL. Residues 540–557 are Cytoplasmic-facing; that stretch reads FSREILNLTWWPLFRDIT. The helical transmembrane segment at 558 to 578 threads the bilayer; sequence FYIFDLMMLILFFLDSLIAWW. E579 is a topological domain (extracellular). Residues 580 to 600 traverse the membrane as a helical segment; that stretch reads SVLLLLAYAFYVFTMKWNQQL. At 601 to 1024 the chain is on the cytoplasmic side; the sequence is ELWVKEQLNK…SLEWPETRRK (424 aa). S652 is subject to Phosphoserine. Residues 677–1018 are disordered; that stretch reads GEARPSKDKE…ENEQPLSLEW (342 aa). The span at 702-712 shows a compositional bias: basic and acidic residues; the sequence is AESKPEEEPAK. Residue T717 is modified to Phosphothreonine. One copy of the 1; approximate repeat lies at 796-811; the sequence is DEDEGEIQAEGGEVKG. Residues 796–928 are 8 X 17 AA tandem repeats of D-E-D-E-G-E-I-Q-A-G-E-[GA]-G-E-V-[EK]-G; it reads DEDEGEIQAE…QAGEAGEVEG (133 aa). 6 tandem repeats follow at residues 812 to 828, 829 to 845, 846 to 862, 863 to 879, 880 to 896, and 897 to 913. Composition is skewed to acidic residues over residues 824–834, 841–851, 858–868, 875–885, 892–902, 924–941, and 981–1011; these read GEVEGDEDEGE, GEVEGEDGEVEGGEDEGE, and GDSEDEEEEDEEEEDEEEEEEEEEEEEEENE. The stretch at 914 to 928 is one 8; approximate repeat; that stretch reads DEGEIQAGEAGEVEG. The chain crosses the membrane as a helical span at residues 1025 to 1045; the sequence is QAIYLFLLPIVFPLWLTVPDV. The Extracellular segment spans residues 1046 to 1052; the sequence is RRLEAKK. The chain crosses the membrane as a helical span at residues 1053–1073; the sequence is FFVITFLGSILWIAMFSYLMV. Residues 1074-1088 lie on the Cytoplasmic side of the membrane; it reads WWAHQVGETIGISEE. Residues 1089–1109 form a helical membrane-spanning segment; that stretch reads IMGLTILAAGTSIPDLITSVI. Residues 1096–1127 form an Alpha-2 repeat; it reads AAGTSIPDLITSVIVARKGLGDMAVSSSVGSN. Topologically, residues 1110 to 1127 are extracellular; it reads VARKGLGDMAVSSSVGSN. Residues 1128–1148 form a helical membrane-spanning segment; that stretch reads IFDITVGLPLPWMLFSLINGL. The Cytoplasmic portion of the chain corresponds to 1149–1157; that stretch reads QPVAVSSNG. A helical membrane pass occupies residues 1158–1178; that stretch reads LFCAIVLLFLMLLFVISSIAL. Residues 1179–1185 are Extracellular-facing; sequence CKWRMNK. Residues 1186–1206 traverse the membrane as a helical segment; sequence ILGFTMFLLYFVFLIISVMLE. The Cytoplasmic portion of the chain corresponds to 1207–1216; the sequence is DRIISCPVSV.

The protein belongs to the Ca(2+):cation antiporter (CaCA) (TC 2.A.19) family. SLC24A subfamily. In terms of processing, the uncleaved signal sequence is required for efficient membrane targeting and proper membrane integration and topology. Glycosylated. As to expression, retina.

The protein localises to the cell membrane. The catalysed reaction is Ca(2+)(out) + K(+)(out) + 4 Na(+)(in) = Ca(2+)(in) + K(+)(in) + 4 Na(+)(out). Its function is as follows. Calcium, potassium:sodium antiporter that transports 1 Ca(2+) and 1 K(+) in exchange for 4 Na(+). Critical component of the visual transduction cascade, controlling the calcium concentration of outer segments during light and darkness. Light causes a rapid lowering of cytosolic free calcium in the outer segment of both retinal rod and cone photoreceptors and the light-induced lowering of calcium is caused by extrusion via this protein which plays a key role in the process of light adaptation. This chain is Sodium/potassium/calcium exchanger 1 (SLC24A1), found in Bos taurus (Bovine).